The primary structure comprises 474 residues: tRNA-2-methylthio-N(6)-dimethylallyladenosine synthase (474 aa).

In terms of domain architecture, MTTase N-terminal spans 3-120 (KKLHIKTWGC…LPDMIEQVRR (118 aa)). Cys-12, Cys-49, Cys-83, Cys-157, Cys-161, and Cys-164 together coordinate [4Fe-4S] cluster. In terms of domain architecture, Radical SAM core spans 143-375 (RAEGPTAFVS…QDRITQQAMR (233 aa)). The region spanning 378 to 441 (RHMMGTVQRI…TNSLRGKFIR (64 aa)) is the TRAM domain.

This sequence belongs to the methylthiotransferase family. MiaB subfamily. As to quaternary structure, monomer. The cofactor is [4Fe-4S] cluster.

The protein resides in the cytoplasm. The enzyme catalyses N(6)-dimethylallyladenosine(37) in tRNA + (sulfur carrier)-SH + AH2 + 2 S-adenosyl-L-methionine = 2-methylsulfanyl-N(6)-dimethylallyladenosine(37) in tRNA + (sulfur carrier)-H + 5'-deoxyadenosine + L-methionine + A + S-adenosyl-L-homocysteine + 2 H(+). Catalyzes the methylthiolation of N6-(dimethylallyl)adenosine (i(6)A), leading to the formation of 2-methylthio-N6-(dimethylallyl)adenosine (ms(2)i(6)A) at position 37 in tRNAs that read codons beginning with uridine. In Shewanella putrefaciens (strain CN-32 / ATCC BAA-453), this protein is tRNA-2-methylthio-N(6)-dimethylallyladenosine synthase.